The sequence spans 30 residues: Cyclotide mela-5 (30 aa).

Positions Gly1–Asp30 form a cross-link, cyclopeptide (Gly-Asp). Intrachain disulfides connect Cys6–Cys20, Cys10–Cys22, and Cys15–Cys27.

Post-translationally, this is a cyclic peptide. In terms of processing, contains 3 disulfide bonds.

Its function is as follows. Probably participates in a plant defense mechanism (Potential). Binds to and induces leakage in phospholipd membranes, particularly ones containing 1-palmitoyl-2-oleophosphatidylethanolamine (POPE). The chain is Cyclotide mela-5 from Melicytus latifolius (Norfolk Island mahoe).